The sequence spans 424 residues: Ribulose bisphosphate carboxylase (424 aa).

Lysine 159 functions as the Proton acceptor in the catalytic mechanism. Lysine 161 serves as a coordination point for substrate. 3 residues coordinate Mg(2+): lysine 185, aspartate 187, and glutamate 188. Lysine 185 bears the N6-carboxylysine mark. The active-site Proton acceptor is histidine 277. Substrate contacts are provided by residues arginine 278, histidine 310, 347-349 (SGG), and 369-372 (QAGG).

This sequence belongs to the RuBisCO large chain family. Type III subfamily. In terms of assembly, homodimer or homodecamer. In contrast to form I RuBisCO, the form III RuBisCO is composed solely of large subunits. It depends on Mg(2+) as a cofactor.

The enzyme catalyses 2 (2R)-3-phosphoglycerate + 2 H(+) = D-ribulose 1,5-bisphosphate + CO2 + H2O. The catalysed reaction is D-ribulose 1,5-bisphosphate + O2 = 2-phosphoglycolate + (2R)-3-phosphoglycerate + 2 H(+). Catalyzes the addition of molecular CO(2) and H(2)O to ribulose 1,5-bisphosphate (RuBP), generating two molecules of 3-phosphoglycerate (3-PGA). Functions in an archaeal AMP degradation pathway, together with AMP phosphorylase and R15P isomerase. This chain is Ribulose bisphosphate carboxylase, found in Pyrococcus abyssi (strain GE5 / Orsay).